Consider the following 130-residue polypeptide: Small ribosomal subunit protein uS11 (130 aa).

It belongs to the universal ribosomal protein uS11 family. In terms of assembly, part of the 30S ribosomal subunit. Interacts with proteins S7 and S18. Binds to IF-3.

In terms of biological role, located on the platform of the 30S subunit, it bridges several disparate RNA helices of the 16S rRNA. Forms part of the Shine-Dalgarno cleft in the 70S ribosome. The polypeptide is Small ribosomal subunit protein uS11 (Buchnera aphidicola subsp. Cinara cedri (strain Cc)).